A 732-amino-acid chain; its full sequence is Engulfment and cell motility protein 2 (732 aa).

Phosphotyrosine is present on tyrosine 48. Residues 323 to 497 (AQRDIIFELR…VVREQITRAL (175 aa)) form the ELMO domain. Serine 515 is modified (phosphoserine). The PH domain occupies 565 to 686 (SSFRKIGNRR…LLGKDMSSEL (122 aa)). Positions 712–719 (PEAPPPVP) match the SH3-binding motif. Tyrosine 729 carries the phosphotyrosine modification.

In terms of assembly, interacts directly with the SH3-domain of DOCK1 via its SH3-binding site. Probably forms a heterotrimeric complex with DOCK1 and RAC1. Interacts with ARHGEF16, DOCK4 and EPHA2; mediates activation of RAC1 by EPHA2. Interacts with ADGRB3. Interacts with AUTS2; the interaction is direct.

It is found in the cytoplasm. The protein resides in the cytosol. It localises to the membrane. In terms of biological role, involved in cytoskeletal rearrangements required for phagocytosis of apoptotic cells and cell motility. Acts in association with DOCK1 and CRK. Was initially proposed to be required in complex with DOCK1 to activate Rac Rho small GTPases. May enhance the guanine nucleotide exchange factor (GEF) activity of DOCK1. The polypeptide is Engulfment and cell motility protein 2 (Elmo2) (Mus musculus (Mouse)).